The chain runs to 394 residues: Phosphoglycerate kinase (394 aa).

Residues 21–23, R36, 59–62, R118, and R151 each bind substrate; these read DFN and HLGR. S183 carries the phosphoserine modification. Residue K201 participates in ATP binding. The residue at position 299 (T299) is a Phosphothreonine. Residues E323 and 350-353 each bind ATP; that span reads GGDS.

This sequence belongs to the phosphoglycerate kinase family. As to quaternary structure, monomer.

Its subcellular location is the cytoplasm. The enzyme catalyses (2R)-3-phosphoglycerate + ATP = (2R)-3-phospho-glyceroyl phosphate + ADP. It functions in the pathway carbohydrate degradation; glycolysis; pyruvate from D-glyceraldehyde 3-phosphate: step 2/5. This Bacillus pumilus (strain SAFR-032) protein is Phosphoglycerate kinase.